The following is a 132-amino-acid chain: Small ribosomal subunit protein uS8 (132 aa).

It belongs to the universal ribosomal protein uS8 family. In terms of assembly, part of the 30S ribosomal subunit. Contacts proteins S5 and S12.

One of the primary rRNA binding proteins, it binds directly to 16S rRNA central domain where it helps coordinate assembly of the platform of the 30S subunit. The polypeptide is Small ribosomal subunit protein uS8 (Geobacter sulfurreducens (strain ATCC 51573 / DSM 12127 / PCA)).